A 300-amino-acid chain; its full sequence is Hemagglutinin 1 (300 aa).

The helical transmembrane segment at 200-221 (FIFATVVFIFLQAGRVPEIIAD) threads the bilayer.

Its subcellular location is the cell membrane. In terms of biological role, induces agglutination of neuraminidase-treated erythrocytes. This Eikenella corrodens protein is Hemagglutinin 1 (hag1).